The sequence spans 182 residues: MTLSNTERAIIESAIRDIKDFPKPGIVFKDITTLLNNGKAFGVTMNHLYEKYKEYNLDYIAGIDARGFIFGAALAQMLGVGFVPIRKKGKLPYTTISEKYSLEYGFDEVEIHLDAFSAIPNARVLLVDDLIATGGTAAASVKLINQAGALCVEACFILCLSFLDGYKKLQELTEVYSLVEVK.

This sequence belongs to the purine/pyrimidine phosphoribosyltransferase family. Homodimer.

The protein localises to the cytoplasm. It carries out the reaction AMP + diphosphate = 5-phospho-alpha-D-ribose 1-diphosphate + adenine. Its pathway is purine metabolism; AMP biosynthesis via salvage pathway; AMP from adenine: step 1/1. Catalyzes a salvage reaction resulting in the formation of AMP, that is energically less costly than de novo synthesis. In Sulfurimonas denitrificans (strain ATCC 33889 / DSM 1251) (Thiomicrospira denitrificans (strain ATCC 33889 / DSM 1251)), this protein is Adenine phosphoribosyltransferase.